Reading from the N-terminus, the 198-residue chain is Mediator of RNA polymerase II transcription subunit 20 (198 aa).

It belongs to the Mediator complex subunit 20 family. In terms of assembly, component of the Mediator complex.

The protein resides in the nucleus. Its function is as follows. Component of the Mediator complex, a coactivator involved in the regulated transcription of nearly all RNA polymerase II-dependent genes. Mediator functions as a bridge to convey information from gene-specific regulatory proteins to the basal RNA polymerase II transcription machinery. Mediator is recruited to promoters by direct interactions with regulatory proteins and serves as a scaffold for the assembly of a functional preinitiation complex with RNA polymerase II and the general transcription factors. In Caenorhabditis briggsae, this protein is Mediator of RNA polymerase II transcription subunit 20 (mdt-20).